The primary structure comprises 279 residues: Dehydrogenase/reductase SDR family member 4 (279 aa).

Residue 37–61 (LVTASTDGIGFAIARRLAEDGAHVV) coordinates NADP(+). An N6-acetyllysine; alternate modification is found at Lys93. N6-succinyllysine; alternate is present on Lys93. At Lys106 the chain carries N6-acetyllysine. Ser170 is a substrate binding site. Tyr183 (proton acceptor) is an active-site residue. Lys187 contacts NADP(+). The residue at position 217 (Lys217) is an N6-acetyllysine; alternate. Lys217 carries the post-translational modification N6-succinyllysine; alternate. Ser221 is subject to Phosphoserine. N6-succinyllysine occurs at positions 228 and 235. Positions 277–279 (SRL) match the Peroxisomal targeting signal motif.

This sequence belongs to the short-chain dehydrogenases/reductases (SDR) family. Homotetramer.

The protein resides in the peroxisome. The enzyme catalyses a secondary alcohol + NADP(+) = a ketone + NADPH + H(+). It catalyses the reaction 3alpha-hydroxy-5beta-pregnan-20-one + NADP(+) = 5beta-pregnan-3,20-dione + NADPH + H(+). It carries out the reaction 5beta-dihydrotestosterone + NADPH + H(+) = 5beta-androstane-3alpha,17beta-diol + NADP(+). The catalysed reaction is all-trans-retinol + NADP(+) = all-trans-retinal + NADPH + H(+). The enzyme catalyses isatin + NADPH + H(+) = 3-hydroxyindolin-2-one + NADP(+). Its function is as follows. NADPH-dependent oxidoreductase which catalyzes the reduction of a variety of compounds bearing carbonyl groups including ketosteroids, alpha-dicarbonyl compounds, aldehydes, aromatic ketones and quinones. Reduces all-trans-retinal and 9-cis retinal. Reduces 3-ketosteroids and benzil into 3alpha-hydroxysteroids and S-benzoin, respectively, in contrast to the stereoselectivity of primates DHRS4s which produce 3beta-hydroxysteroids and R-benzoin. In the reverse reaction, catalyzes the NADP-dependent oxidation of 3alpha-hydroxysteroids and alcohol, but with much lower efficiency. Involved in the metabolism of 3alpha-hydroxysteroids, retinoid, isatin and xenobiotic carbonyl compounds. The sequence is that of Dehydrogenase/reductase SDR family member 4 from Mus musculus (Mouse).